Here is a 621-residue protein sequence, read N- to C-terminus: Putative acyltransferase plsB1 (621 aa).

Positions 123–128 (HRSYLD) match the HXXXXD motif motif.

The protein belongs to the GPAT/DAPAT family.

The protein localises to the cell membrane. The chain is Putative acyltransferase plsB1 (plsB1) from Mycobacterium bovis (strain ATCC BAA-935 / AF2122/97).